The primary structure comprises 163 residues: MRCLVALILTVLIVTPEVEAKTLPDKFLGTFKLERDENFDEYLKARGYGWIMRQVIKLAGVTKKFRNAASGKPDRYDMENLTTKKDTHHKDWALGEEFQDEALDSTQHKITFDLKDPNTLTETHIKVDDPTDVETYEYRRDGDYLVMKMSWKGVSTSRYYKKQ.

Positions 1-23 are cleaved as a signal peptide; it reads MRCLVALILTVLIVTPEVEAKTL.

This sequence belongs to the calycin superfamily. Fatty-acid binding protein (FABP) family. As to expression, abundant in the fluid surrounding the developing embryo of Ascaris suum.

Functionally, may play a role in sequestering potentially toxic fatty acids and their peroxidation products, or it may be involved in the maintenance of the impermeable lipid layer of the eggshell. The sequence is that of Fatty acid-binding protein homolog from Ascaris suum (Pig roundworm).